Consider the following 168-residue polypeptide: G/U mismatch-specific DNA glycosylase (168 aa).

This sequence belongs to the uracil-DNA glycosylase (UDG) superfamily. TDG/mug family. As to quaternary structure, binds DNA as a monomer.

The protein resides in the cytoplasm. It catalyses the reaction Specifically hydrolyzes mismatched double-stranded DNA and polynucleotides, releasing free uracil.. Functionally, excises ethenocytosine and uracil, which can arise by alkylation or deamination of cytosine, respectively, from the corresponding mispairs with guanine in ds-DNA. It is capable of hydrolyzing the carbon-nitrogen bond between the sugar-phosphate backbone of the DNA and the mispaired base. The complementary strand guanine functions in substrate recognition. Required for DNA damage lesion repair in stationary-phase cells. The protein is G/U mismatch-specific DNA glycosylase of Klebsiella pneumoniae subsp. pneumoniae (strain ATCC 700721 / MGH 78578).